Consider the following 500-residue polypeptide: L-arabinose isomerase (500 aa).

Mn(2+) is bound by residues glutamate 306, glutamate 333, histidine 350, and histidine 450.

Belongs to the arabinose isomerase family. As to quaternary structure, homohexamer. Mn(2+) serves as cofactor.

It catalyses the reaction beta-L-arabinopyranose = L-ribulose. It participates in carbohydrate degradation; L-arabinose degradation via L-ribulose; D-xylulose 5-phosphate from L-arabinose (bacterial route): step 1/3. In terms of biological role, catalyzes the conversion of L-arabinose to L-ribulose. This is L-arabinose isomerase from Escherichia coli (strain 55989 / EAEC).